The following is a 313-amino-acid chain: Pyrimidine-specific ribonucleoside hydrolase RihA (313 aa).

Histidine 240 is an active-site residue.

This sequence belongs to the IUNH family. RihA subfamily.

Hydrolyzes cytidine or uridine to ribose and cytosine or uracil, respectively. The chain is Pyrimidine-specific ribonucleoside hydrolase RihA from Enterobacter sp. (strain 638).